Consider the following 358-residue polypeptide: Gibberellin 3-beta-dioxygenase 1 (358 aa).

In terms of domain architecture, Fe2OG dioxygenase spans 204–308 (DLNWAQAALQ…RLSVAFLWGP (105 aa)). Fe cation-binding residues include His-232, Asp-234, and His-289. Arg-299 is an active-site residue.

The protein belongs to the iron/ascorbate-dependent oxidoreductase family. GA3OX subfamily. L-ascorbate serves as cofactor. The cofactor is Fe cation. Expressed in stems, roots, leaves, flowers, and siliques. Highly expressed near the nodes in stems and in the stamen filaments of flowers. Detected in developing cotyledons, vegetative shoot apical meristem and non-meristematic, non-elongation regions of the roots. Found in the cortex and the endodermis of the embryo axis in germinating seeds and in the placenta in developing siliques.

The catalysed reaction is gibberellin A9 + 2-oxoglutarate + O2 = gibberellin A4 + succinate + CO2. It carries out the reaction gibberellin A20 + 2-oxoglutarate + O2 = gibberellin A1 + succinate + CO2. Its pathway is plant hormone biosynthesis; gibberellin biosynthesis. Functionally, converts the inactive gibberellin (GA) precursors GA9 and GA20 into the bioactives gibberellins GA4 and GA1, respectively. Involved in the production of bioactive GA for vegetative growth and development. The polypeptide is Gibberellin 3-beta-dioxygenase 1 (GA3OX1) (Arabidopsis thaliana (Mouse-ear cress)).